The sequence spans 114 residues: UPF0342 protein NT01CX_2274 (114 aa).

It belongs to the UPF0342 family.

This is UPF0342 protein NT01CX_2274 from Clostridium novyi (strain NT).